Here is a 144-residue protein sequence, read N- to C-terminus: Peroxisome assembly protein 22 (144 aa).

The chain crosses the membrane as a helical span at residues 13–35; that stretch reads YGAVSLASLLVAASIVAYRWWNA.

The protein belongs to the peroxin-22 family.

The protein localises to the peroxisome membrane. Involved in peroxisome biogenesis. This chain is Peroxisome assembly protein 22 (PEX22), found in Eremothecium gossypii (strain ATCC 10895 / CBS 109.51 / FGSC 9923 / NRRL Y-1056) (Yeast).